The sequence spans 303 residues: Ribonucleoside-diphosphate reductase small subunit (303 aa).

Fe cation contacts are provided by Asp60, Glu90, and His93. Residue Tyr97 is part of the active site. A helical membrane pass occupies residues 147–167 (LLMILIEGIFFASSFASISYL). Positions 153, 187, and 190 each coordinate Fe cation.

It belongs to the ribonucleoside diphosphate reductase small chain family. Heterotetramer composed of a homodimer of the large subunit (R1) and a homodimer of the small subunit (R2). Larger multisubunit protein complex are also active, composed of (R1)n(R2)n. Fe cation is required as a cofactor.

It is found in the host membrane. It catalyses the reaction a 2'-deoxyribonucleoside 5'-diphosphate + [thioredoxin]-disulfide + H2O = a ribonucleoside 5'-diphosphate + [thioredoxin]-dithiol. Functionally, ribonucleoside-diphosphate reductase holoenzyme provides the precursors necessary for viral DNA synthesis. Allows virus growth in non-dividing cells, as well as reactivation from latency in infected hosts. Catalyzes the biosynthesis of deoxyribonucleotides from the corresponding ribonucleotides. The protein is Ribonucleoside-diphosphate reductase small subunit of Suid herpesvirus 1 (strain Kaplan) (SuHV-1).